Here is a 326-residue protein sequence, read N- to C-terminus: F-box/LRR-repeat protein 12 (326 aa).

Residues 1–47 (MATLVELPDSVLLEIFSYLPVRDRIRISRVCHRWKRLVDDRWLWRHV) enclose the F-box domain. 8 LRR repeats span residues 51 to 78 (LYTM…RMGG), 86 to 111 (APQL…CLHV), 113 to 133 (DLSM…ELHS), 161 to 185 (VPAF…VLGG), 186 to 211 (TYRV…EVLG), 212 to 236 (CTLS…IRLT), 237 to 261 (VRGL…CLQG), and 266 to 291 (PEMP…ELQG).

Interacts with SKP1 and CUL1.

The protein operates within protein modification; protein ubiquitination. Functionally, substrate-recognition component of the SCF (SKP1-CUL1-F-box protein)-type E3 ubiquitin ligase complex. Mediates the polyubiquitination and proteasomal degradation of CAMK1 leading to disruption of cyclin D1/CDK4 complex assembly which results in G1 cell cycle arrest in lung epithelia. This chain is F-box/LRR-repeat protein 12 (FBXL12), found in Homo sapiens (Human).